The chain runs to 203 residues: dITP/XTP pyrophosphatase (203 aa).

8-13 contacts substrate; it reads TANKGK. Positions 41 and 70 each coordinate Mg(2+). Catalysis depends on aspartate 70, which acts as the Proton acceptor. Residues serine 71, 153-156, lysine 176, and 181-182 each bind substrate; these read FGYD and HR.

Belongs to the HAM1 NTPase family. Homodimer. It depends on Mg(2+) as a cofactor.

It catalyses the reaction XTP + H2O = XMP + diphosphate + H(+). It carries out the reaction dITP + H2O = dIMP + diphosphate + H(+). The catalysed reaction is ITP + H2O = IMP + diphosphate + H(+). In terms of biological role, pyrophosphatase that catalyzes the hydrolysis of nucleoside triphosphates to their monophosphate derivatives, with a high preference for the non-canonical purine nucleotides XTP (xanthosine triphosphate), dITP (deoxyinosine triphosphate) and ITP. Seems to function as a house-cleaning enzyme that removes non-canonical purine nucleotides from the nucleotide pool, thus preventing their incorporation into DNA/RNA and avoiding chromosomal lesions. The polypeptide is dITP/XTP pyrophosphatase (Listeria innocua serovar 6a (strain ATCC BAA-680 / CLIP 11262)).